The chain runs to 443 residues: Signal recognition particle 54 kDa protein (443 aa).

GTP-binding positions include 107-114 (GVQGSGKT), 189-193 (DTAGR), and 247-250 (TKLD).

The protein belongs to the GTP-binding SRP family. SRP54 subfamily. In terms of assembly, part of the signal recognition particle protein translocation system, which is composed of SRP and FtsY. Archaeal SRP consists of a 7S RNA molecule of 300 nucleotides and two protein subunits: SRP54 and SRP19.

It is found in the cytoplasm. It carries out the reaction GTP + H2O = GDP + phosphate + H(+). Involved in targeting and insertion of nascent membrane proteins into the cytoplasmic membrane. Binds to the hydrophobic signal sequence of the ribosome-nascent chain (RNC) as it emerges from the ribosomes. The SRP-RNC complex is then targeted to the cytoplasmic membrane where it interacts with the SRP receptor FtsY. This chain is Signal recognition particle 54 kDa protein, found in Pyrococcus horikoshii (strain ATCC 700860 / DSM 12428 / JCM 9974 / NBRC 100139 / OT-3).